Here is a 607-residue protein sequence, read N- to C-terminus: Elongation factor 4 (607 aa).

Residues 11–193 (SKIRNFSIIA…QIVEKVPAPA (183 aa)) form the tr-type G domain. Residues 23–28 (DHGKST) and 140–143 (NKID) each bind GTP.

It belongs to the TRAFAC class translation factor GTPase superfamily. Classic translation factor GTPase family. LepA subfamily.

It is found in the cell membrane. The catalysed reaction is GTP + H2O = GDP + phosphate + H(+). In terms of biological role, required for accurate and efficient protein synthesis under certain stress conditions. May act as a fidelity factor of the translation reaction, by catalyzing a one-codon backward translocation of tRNAs on improperly translocated ribosomes. Back-translocation proceeds from a post-translocation (POST) complex to a pre-translocation (PRE) complex, thus giving elongation factor G a second chance to translocate the tRNAs correctly. Binds to ribosomes in a GTP-dependent manner. In Bacillus cereus (strain ATCC 14579 / DSM 31 / CCUG 7414 / JCM 2152 / NBRC 15305 / NCIMB 9373 / NCTC 2599 / NRRL B-3711), this protein is Elongation factor 4.